The chain runs to 721 residues: Leucine-rich repeat flightless-interacting protein 2 (721 aa).

Residues M1–E370 form a DVL3-binding region. S18 carries the post-translational modification Phosphoserine. Residues E22 to R49 are a coiled coil. 6 positions are modified to phosphoserine: G96, L101, Y168, S173, S190, and S202. Disordered regions lie at residues S232–V262 and K295–D338. 2 stretches are compositionally biased toward polar residues: residues P237–D251 and T305–D338. S309, S312, S320, S324, and S328 each carry phosphoserine. Position 331 is a phosphothreonine (T331). S332 and S333 each carry phosphoserine. 2 coiled-coil regions span residues D349–H524 and L566–R714.

This sequence belongs to the LRRFIP family. Interacts (via N-terminus) with DVL3. Interacts with FLII. Weakly interacts with MYD88 in resting cells. Following LPS-stimulation, the interaction with MYD88 is rapidly enhanced; the complex gradually dissociates to basal levels after 6 hours of stimulation. Interaction with MYD88 is regulated by LPS-induced phosphorylation at Ser-202. In the presence of LPS, competes with FLII for MYD88-binding. In terms of processing, ser-190 and Ser-202 are phosphorylated in response to LPS stimulation. Ser-202 phosphorylation regulates the LPS-induced interaction with MYD88. Widely expressed, with highest levels in heart and skeletal muscle.

Its function is as follows. May function as activator of the canonical Wnt signaling pathway, in association with DVL3, upstream of CTNNB1/beta-catenin. Positively regulates Toll-like receptor (TLR) signaling in response to agonist probably by competing with the negative FLII regulator for MYD88-binding. The chain is Leucine-rich repeat flightless-interacting protein 2 (LRRFIP2) from Homo sapiens (Human).